We begin with the raw amino-acid sequence, 260 residues long: Triosephosphate isomerase (260 aa).

Residue asparagine 11–lysine 13 coordinates substrate. Residue histidine 103 is the Electrophile of the active site. Glutamate 175 (proton acceptor) is an active-site residue. Residues glycine 181, serine 220, and glycine 241–glycine 242 contribute to the substrate site.

The protein belongs to the triosephosphate isomerase family. In terms of assembly, homodimer.

The protein localises to the cytoplasm. The enzyme catalyses D-glyceraldehyde 3-phosphate = dihydroxyacetone phosphate. It functions in the pathway carbohydrate biosynthesis; gluconeogenesis. Its pathway is carbohydrate degradation; glycolysis; D-glyceraldehyde 3-phosphate from glycerone phosphate: step 1/1. Involved in the gluconeogenesis. Catalyzes stereospecifically the conversion of dihydroxyacetone phosphate (DHAP) to D-glyceraldehyde-3-phosphate (G3P). The chain is Triosephosphate isomerase from Shewanella halifaxensis (strain HAW-EB4).